Here is a 96-residue protein sequence, read N- to C-terminus: Putative septation protein SpoVG (96 aa).

It belongs to the SpoVG family.

Could be involved in septation. The sequence is that of Putative septation protein SpoVG from Oceanobacillus iheyensis (strain DSM 14371 / CIP 107618 / JCM 11309 / KCTC 3954 / HTE831).